We begin with the raw amino-acid sequence, 493 residues long: Trigger factor (493 aa).

Residues 162 to 243 enclose the PPIase FKBP-type domain; sequence GDFVSLDLSA…VRGVKEKELP (82 aa). The disordered stretch occupies residues 432-493; that stretch reads ELALPARPAP…AAVDSGDRDI (62 aa). Over residues 449-470 the composition is skewed to basic and acidic residues; that stretch reads HAGHDHEGHDHADHAGHDHAGD. The segment covering 474 to 485 has biased composition (low complexity); sequence AEPAEAPAATAA.

Belongs to the FKBP-type PPIase family. Tig subfamily.

The protein localises to the cytoplasm. The catalysed reaction is [protein]-peptidylproline (omega=180) = [protein]-peptidylproline (omega=0). In terms of biological role, involved in protein export. Acts as a chaperone by maintaining the newly synthesized protein in an open conformation. Functions as a peptidyl-prolyl cis-trans isomerase. The polypeptide is Trigger factor (Frankia alni (strain DSM 45986 / CECT 9034 / ACN14a)).